Reading from the N-terminus, the 202-residue chain is Small ribosomal subunit protein uS4 (202 aa).

Over residues 1-13 (MSRYRGPRLRITR) the composition is skewed to basic residues. Residues 1–43 (MSRYRGPRLRITRRLGDLPGLTRKAAKRSHPPGQHGQARRKRS) form a disordered region. The S4 RNA-binding domain occupies 90–152 (NRLDNVCFRL…KGSKKLAEAN (63 aa)).

It belongs to the universal ribosomal protein uS4 family. As to quaternary structure, part of the 30S ribosomal subunit. Contacts protein S5. The interaction surface between S4 and S5 is involved in control of translational fidelity.

One of the primary rRNA binding proteins, it binds directly to 16S rRNA where it nucleates assembly of the body of the 30S subunit. In terms of biological role, with S5 and S12 plays an important role in translational accuracy. This is Small ribosomal subunit protein uS4 from Prochlorococcus marinus (strain MIT 9303).